Reading from the N-terminus, the 364-residue chain is Delta(7)-sterol 5(6)-desaturase (364 aa).

3 consecutive transmembrane segments (helical) span residues 94-114 (FFSLWAVVTVFGLLLYLITAS), 142-162 (LAVSAIPTMSLLTVPWFMLEL), and 181-201 (KLLIEYATFIFFTDCGIYLAH). The region spanning 188-312 (TFIFFTDCGI…FTTLWDRLGG (125 aa)) is the Fatty acid hydroxylase domain. A Histidine box-1 motif is present at residues 201–205 (HRWLH). A Histidine box-2 motif is present at residues 214–218 (HKPHH). The chain crosses the membrane as a helical span at residues 249–269 (ILPLHKISYLILFTFVNFWSV). Positions 289–293 (HTVHH) match the Histidine box-3 motif.

It belongs to the sterol desaturase family. Fe cation serves as cofactor.

It localises to the endoplasmic reticulum membrane. It catalyses the reaction a Delta(7)-sterol + 2 Fe(II)-[cytochrome b5] + O2 + 2 H(+) = a Delta(5),Delta(7)-sterol + 2 Fe(III)-[cytochrome b5] + 2 H2O. It participates in steroid metabolism; ergosterol biosynthesis; ergosterol from zymosterol: step 3/5. Functionally, catalyzes the introduction of a C-5 double bond in the B ring of ergosterol. May contribute to the regulation of ergosterol biosynthesis. This Candida glabrata (strain ATCC 2001 / BCRC 20586 / JCM 3761 / NBRC 0622 / NRRL Y-65 / CBS 138) (Yeast) protein is Delta(7)-sterol 5(6)-desaturase (ERG3).